We begin with the raw amino-acid sequence, 145 residues long: Toxin coregulated pilus biosynthesis protein H (145 aa).

Its function is as follows. Involved in TCP pilus biogenesis. This is Toxin coregulated pilus biosynthesis protein H (tcpH) from Vibrio cholerae serotype O1 (strain ATCC 39315 / El Tor Inaba N16961).